We begin with the raw amino-acid sequence, 404 residues long: MAAVPELLQQQEEDRSKLRSVSVDLNVDPSLQIDIPDALSERDKVKFTVHTKTTLPTFQSPEFSVTRQHEDFVWLHDTLIETTDYAGLIIPPAPTKPDFDGPREKMQKLGEGEGSMTKEEFAKMKQELEAEYLAVFKKTVSSHEVFLQRLSSHPVLSKDRNFHVFLEYDQDLSVRRKNTKEMFGGFFKSVVKSADEVLFTGVKEVDDFFEQEKNFLINYYNRIKDSCVKADKMTRSHKNVADDYIHTAACLHSLALEEPTVIKKYLLKVAELFEKLRKVEGRVSSDEDLKLTELLRYYMLNIEAAKDLLYRRTKALIDYENSNKALDKARLKSKDVKLAEAHQQECCQKFEQLSESAKEELINFKRKRVAAFRKNLIEMSELEIKHARNNVSLLQSCIDLFKNN.

An N-acetylalanine modification is found at A2. The region spanning 25 to 172 is the PX domain; sequence LNVDPSLQID…HVFLEYDQDL (148 aa). A 1,2-diacyl-sn-glycero-3-phospho-(1D-myo-inositol-4,5-bisphosphate) contacts are provided by residues 40–46, 99–105, and 113–116; these read SERDKVK, FDGPREK, and EGSM. The interval 169-261 is interaction with DOCK1; it reads DQDLSVRRKN…HSLALEEPTV (93 aa). The interval 183 to 200 is membrane-binding amphipathic helix; that stretch reads FGGFFKSVVKSADEVLFT. Phosphoserine is present on S193. A BAR domain is found at 202–404; it reads VKEVDDFFEQ…QSCIDLFKNN (203 aa). Residue K275 is modified to N6-acetyllysine.

The protein belongs to the sorting nexin family. In terms of assembly, forms heterodimers with BAR domain-containing sorting nexins SNX1 and SNX2; does not homodimerize. The heterodimers are proposed to self-assemble into helical arrays on the membrane to stabilize and expand local membrane curvature underlying endosomal tubule formation. Thought to be a component of the originally described retromer complex (also called SNX-BAR retromer) which is a pentamer containing the heterotrimeric retromer cargo-selective complex (CSC), also described as vacuolar protein sorting subcomplex (VPS), and a heterodimeric membrane-deforming subcomplex formed between SNX1 or SNX2 and SNX5 or SNX6 (also called SNX-BAR subcomplex); the respective CSC and SNX-BAR subcomplexes associate with low affinity. Interacts with SNX1, SNX2, VPS26A, VPS29, VPS35, DCTN1, DOCK1, MIB1, PIP5K1C isoform 3. Interacts with HGS; increased by PIP5K1C isoform 3 kinase activity and by PtdIns(3P) and/or PtdIns(3,4)P2. (Microbial infection) Interacts with human cytomegalovirus proteins UL35 and UL35A; these interactions inhibit the ability of USP7 to form nuclear bodies.

It is found in the endosome. The protein resides in the early endosome. It localises to the early endosome membrane. The protein localises to the cell membrane. Its subcellular location is the cytoplasmic vesicle membrane. It is found in the cytoplasm. The protein resides in the cell projection. It localises to the phagocytic cup. The protein localises to the ruffle. Involved in several stages of intracellular trafficking. Interacts with membranes containing phosphatidylinositol 3-phosphate (PtdIns(3P)) or phosphatidylinositol 3,4-bisphosphate (PtdIns(3,4)P2). Acts in part as component of the retromer membrane-deforming SNX-BAR subcomplex. The SNX-BAR retromer mediates retrograde transport of cargo proteins from endosomes to the trans-Golgi network (TGN) and is involved in endosome-to-plasma membrane transport for cargo protein recycling. The SNX-BAR subcomplex functions to deform the donor membrane into a tubular profile called endosome-to-TGN transport carrier (ETC). Does not have in vitro vesicle-to-membrane remodeling activity. Involved in retrograde transport of lysosomal enzyme receptor IGF2R. May function as link between endosomal transport vesicles and dynactin. Plays a role in the internalization of EGFR after EGF stimulation. Involved in EGFR endosomal sorting and degradation; the function involves PIP5K1C isoform 3 and is retromer-independent. Together with PIP5K1C isoform 3 facilitates HGS interaction with ubiquitinated EGFR, which initiates EGFR sorting to intraluminal vesicles (ILVs) of the multivesicular body for subsequent lysosomal degradation. Involved in E-cadherin sorting and degradation; inhibits PIP5K1C isoform 3-mediated E-cadherin degradation. Plays a role in macropinocytosis. This chain is Sorting nexin-5 (SNX5), found in Homo sapiens (Human).